We begin with the raw amino-acid sequence, 151 residues long: 3-hydroxyacyl-[acyl-carrier-protein] dehydratase FabZ (151 aa).

Residue His56 is part of the active site.

It belongs to the thioester dehydratase family. FabZ subfamily.

Its subcellular location is the cytoplasm. The catalysed reaction is a (3R)-hydroxyacyl-[ACP] = a (2E)-enoyl-[ACP] + H2O. Involved in unsaturated fatty acids biosynthesis. Catalyzes the dehydration of short chain beta-hydroxyacyl-ACPs and long chain saturated and unsaturated beta-hydroxyacyl-ACPs. The chain is 3-hydroxyacyl-[acyl-carrier-protein] dehydratase FabZ from Nitrobacter hamburgensis (strain DSM 10229 / NCIMB 13809 / X14).